Reading from the N-terminus, the 958-residue chain is SLIT and NTRK-like protein 5 (958 aa).

The first 40 residues, methionine 1–threonine 40, serve as a signal peptide directing secretion. Residues isoleucine 41 to serine 664 lie on the Extracellular side of the membrane. 6 LRR repeats span residues proline 82 to asparagine 103, glycine 106 to glycine 127, glycine 130 to glycine 151, asparagine 154 to lysine 175, leucine 178 to phenylalanine 199, and proline 201 to glutamine 222. Asparagine 103 carries an N-linked (GlcNAc...) asparagine glycan. Residues asparagine 235 to arginine 286 form the LRRCT 1 domain. Residues alanine 317–tyrosine 358 form a disordered region. In terms of domain architecture, LRRNT spans glutamine 365–lysine 407. 6 LRR repeats span residues asparagine 410–glutamate 431, glycine 434–aspartate 455, asparagine 458–glycine 479, serine 482–proline 503, asparagine 506–glycine 527, and threonine 529–aspartate 550. An LRRCT 2 domain is found at asparagine 563–aspartate 614. Residue asparagine 644 is glycosylated (N-linked (GlcNAc...) asparagine). Residues valine 665–phenylalanine 685 form a helical membrane-spanning segment. Topologically, residues valine 686–phenylalanine 958 are cytoplasmic. Residues asparagine 789–leucine 844 form a disordered region. Residues glutamine 797 to glutamine 812 show a composition bias toward pro residues.

The protein belongs to the SLITRK family. In terms of tissue distribution, expressed predominantly in the cerebral cortex of the brain but also at low levels in the spinal cord and medulla.

The protein resides in the membrane. In terms of biological role, suppresses neurite outgrowth. The chain is SLIT and NTRK-like protein 5 (SLITRK5) from Homo sapiens (Human).